The sequence spans 142 residues: Hemoglobin subunit alpha-A (142 aa).

The Globin domain occupies 2-142 (VLSAADKTNV…VGAVLTAKYR (141 aa)). Histidine 59 contacts O2. Histidine 88 is a heme b binding site.

Belongs to the globin family. Heterotetramer of two alpha chains and two beta chains. As to expression, red blood cells.

Involved in oxygen transport from the lung to the various peripheral tissues. This chain is Hemoglobin subunit alpha-A (HBAA), found in Anas platyrhynchos (Mallard).